The following is a 137-amino-acid chain: F420H(2)-dependent biliverdin reductase (137 aa).

Coenzyme F420-(gamma-Glu)n is bound by residues 36 to 41 (HVVAVG), 54 to 55 (IT), 60 to 61 (QK), R67, and 78 to 81 (GARW).

This sequence belongs to the F420H(2)-dependent biliverdin reductase family. As to quaternary structure, homodimer.

The protein localises to the cell surface. It localises to the secreted. The enzyme catalyses (4Z,15Z)-bilirubin IXalpha + oxidized coenzyme F420-(gamma-L-Glu)(n) + H(+) = biliverdin IXalpha + reduced coenzyme F420-(gamma-L-Glu)(n). Functionally, catalyzes the F420H(2)-dependent reduction of biliverdin-IXalpha at C10 position, leading to bilirubin-IXalpha, a potent antioxidant. As biliverdin-IXalpha is produced in high amounts in macrophages infected with M.tuberculosis, its reduction by Rv2074 may play a role in protecting mycobacteria against oxidative stress, aiding the persistence of M.tuberculosis infection. This Mycobacterium tuberculosis (strain CDC 1551 / Oshkosh) protein is F420H(2)-dependent biliverdin reductase.